Here is a 541-residue protein sequence, read N- to C-terminus: Chaperonin GroEL 1 (541 aa).

ATP is bound by residues 29–32 (TLGP), 86–90 (DGTTT), Gly413, 478–480 (NAA), and Asp494. Residues 520-541 (VVEKPAEAEDDGHGHGHGHHHH) are disordered. The span at 523 to 533 (KPAEAEDDGHG) shows a compositional bias: basic and acidic residues.

The protein belongs to the chaperonin (HSP60) family. In terms of assembly, forms a cylinder of 14 subunits composed of two heptameric rings stacked back-to-back. Interacts with the co-chaperonin GroES.

The protein localises to the cytoplasm. The enzyme catalyses ATP + H2O + a folded polypeptide = ADP + phosphate + an unfolded polypeptide.. In terms of biological role, together with its co-chaperonin GroES, plays an essential role in assisting protein folding. The GroEL-GroES system forms a nano-cage that allows encapsulation of the non-native substrate proteins and provides a physical environment optimized to promote and accelerate protein folding. This is Chaperonin GroEL 1 from Mycolicibacterium gilvum (strain PYR-GCK) (Mycobacterium gilvum (strain PYR-GCK)).